A 269-amino-acid chain; its full sequence is Monofunctional glycosyltransferase (269 aa).

Residues isoleucine 46 to threonine 66 form a helical membrane-spanning segment.

This sequence belongs to the glycosyltransferase 51 family.

It is found in the cell membrane. The enzyme catalyses [GlcNAc-(1-&gt;4)-Mur2Ac(oyl-L-Ala-gamma-D-Glu-L-Lys-D-Ala-D-Ala)](n)-di-trans,octa-cis-undecaprenyl diphosphate + beta-D-GlcNAc-(1-&gt;4)-Mur2Ac(oyl-L-Ala-gamma-D-Glu-L-Lys-D-Ala-D-Ala)-di-trans,octa-cis-undecaprenyl diphosphate = [GlcNAc-(1-&gt;4)-Mur2Ac(oyl-L-Ala-gamma-D-Glu-L-Lys-D-Ala-D-Ala)](n+1)-di-trans,octa-cis-undecaprenyl diphosphate + di-trans,octa-cis-undecaprenyl diphosphate + H(+). It participates in cell wall biogenesis; peptidoglycan biosynthesis. Functionally, peptidoglycan polymerase that catalyzes glycan chain elongation using lipid-linked disaccharide-pentapeptide as the substrate. This chain is Monofunctional glycosyltransferase, found in Staphylococcus aureus (strain JH1).